We begin with the raw amino-acid sequence, 49 residues long: Large ribosomal subunit protein bL33 (49 aa).

This sequence belongs to the bacterial ribosomal protein bL33 family.

The protein is Large ribosomal subunit protein bL33 of Clostridium perfringens (strain ATCC 13124 / DSM 756 / JCM 1290 / NCIMB 6125 / NCTC 8237 / Type A).